A 761-amino-acid chain; its full sequence is Phosphoribosylformylglycinamidine synthase subunit PurL (761 aa).

Residue H58 is part of the active site. Y61 and K105 together coordinate ATP. E107 serves as a coordination point for Mg(2+). Substrate is bound by residues 108-111 (SHNH) and R130. Residue H109 is the Proton acceptor of the active site. D131 provides a ligand contact to Mg(2+). Q259 serves as a coordination point for substrate. D287 serves as a coordination point for Mg(2+). Position 331 to 333 (331 to 333 (ESQ)) interacts with substrate. ATP-binding residues include N519 and G556. Position 557 (N557) interacts with Mg(2+). S559 provides a ligand contact to substrate.

This sequence belongs to the FGAMS family. Monomer. Part of the FGAM synthase complex composed of 1 PurL, 1 PurQ and 2 PurS subunits.

The protein localises to the cytoplasm. It carries out the reaction N(2)-formyl-N(1)-(5-phospho-beta-D-ribosyl)glycinamide + L-glutamine + ATP + H2O = 2-formamido-N(1)-(5-O-phospho-beta-D-ribosyl)acetamidine + L-glutamate + ADP + phosphate + H(+). It functions in the pathway purine metabolism; IMP biosynthesis via de novo pathway; 5-amino-1-(5-phospho-D-ribosyl)imidazole from N(2)-formyl-N(1)-(5-phospho-D-ribosyl)glycinamide: step 1/2. Part of the phosphoribosylformylglycinamidine synthase complex involved in the purines biosynthetic pathway. Catalyzes the ATP-dependent conversion of formylglycinamide ribonucleotide (FGAR) and glutamine to yield formylglycinamidine ribonucleotide (FGAM) and glutamate. The FGAM synthase complex is composed of three subunits. PurQ produces an ammonia molecule by converting glutamine to glutamate. PurL transfers the ammonia molecule to FGAR to form FGAM in an ATP-dependent manner. PurS interacts with PurQ and PurL and is thought to assist in the transfer of the ammonia molecule from PurQ to PurL. The protein is Phosphoribosylformylglycinamidine synthase subunit PurL of Rhodococcus jostii (strain RHA1).